The sequence spans 236 residues: MTVTADPVTLMKQEVGKAAAALVKSGSIVGLGTGSTTAYTIQYLGDRLKSGELTDIVGIPTSFQSEVLSKQYGVPLTTLDAVDHIDIAIDGADEVDPHKNLIKGGGAAHTREKVVDYLANQFIVVVDSGKLVDRLGSVFAVPVEVIPMAITPVTNAIKQLGGKPELRMGVKKAGPVITDQGNFVLDVRFDSIDDPVNLEKILNNIPGVLENGIFVNCADIVLVGEVKDGQPLVRRL.

Residues 33-36, 90-93, and 103-106 contribute to the substrate site; these read TGST, DGAD, and KGGG. Catalysis depends on glutamate 112, which acts as the Proton acceptor. Lysine 130 lines the substrate pocket.

This sequence belongs to the ribose 5-phosphate isomerase family. In terms of assembly, homodimer.

It catalyses the reaction aldehydo-D-ribose 5-phosphate = D-ribulose 5-phosphate. The protein operates within carbohydrate degradation; pentose phosphate pathway; D-ribose 5-phosphate from D-ribulose 5-phosphate (non-oxidative stage): step 1/1. In terms of biological role, catalyzes the reversible conversion of ribose-5-phosphate to ribulose 5-phosphate. This chain is Ribose-5-phosphate isomerase A, found in Nostoc sp. (strain PCC 7120 / SAG 25.82 / UTEX 2576).